Consider the following 117-residue polypeptide: Immunoglobulin heavy variable 5-51 (117 aa).

Residues Met-1–Ala-19 form the signal peptide. Residues Glu-20–Ser-44 are framework-1. Positions Glu-20–Arg-117 constitute an Ig-like domain. Cys-41 and Cys-115 form a disulfide bridge. Residues Gly-45–Trp-52 form a complementarity-determining-1 region. A framework-2 region spans residues Ile-53–Ile-69. Positions Ile-70–Thr-77 are complementarity-determining-2. The segment at Arg-78–Cys-115 is framework-3. The complementarity-determining-3 stretch occupies residues Ala-116–Arg-117.

Immunoglobulins are composed of two identical heavy chains and two identical light chains; disulfide-linked.

It is found in the secreted. The protein resides in the cell membrane. Functionally, v region of the variable domain of immunoglobulin heavy chains that participates in the antigen recognition. Immunoglobulins, also known as antibodies, are membrane-bound or secreted glycoproteins produced by B lymphocytes. In the recognition phase of humoral immunity, the membrane-bound immunoglobulins serve as receptors which, upon binding of a specific antigen, trigger the clonal expansion and differentiation of B lymphocytes into immunoglobulins-secreting plasma cells. Secreted immunoglobulins mediate the effector phase of humoral immunity, which results in the elimination of bound antigens. The antigen binding site is formed by the variable domain of one heavy chain, together with that of its associated light chain. Thus, each immunoglobulin has two antigen binding sites with remarkable affinity for a particular antigen. The variable domains are assembled by a process called V-(D)-J rearrangement and can then be subjected to somatic hypermutations which, after exposure to antigen and selection, allow affinity maturation for a particular antigen. The polypeptide is Immunoglobulin heavy variable 5-51 (Homo sapiens (Human)).